A 274-amino-acid chain; its full sequence is Centriolar and ciliogenesis-associated protein hyls-1 (274 aa).

Disordered regions lie at residues 156 to 188 (RSSV…SSRP) and 255 to 274 (NNED…PYID). Residues 171–183 (VGLSTETEQSELQ) show a composition bias toward polar residues. The span at 257–274 (EDWKANHDKDWSPRPYID) shows a compositional bias: basic and acidic residues.

This sequence belongs to the HYLS1 family. In terms of assembly, interacts with sas-4; leading to its localization into newly forming centrioles.

Its subcellular location is the cytoplasm. The protein resides in the cytoskeleton. The protein localises to the microtubule organizing center. It localises to the centrosome. It is found in the centriole. Its subcellular location is the cell projection. The protein resides in the cilium. Functionally, plays an important role in ciliogenesis. This Caenorhabditis elegans protein is Centriolar and ciliogenesis-associated protein hyls-1.